The primary structure comprises 734 residues: Alpha-catulin (734 aa).

Phosphoserine is present on residues S374 and S538.

Belongs to the vinculin/alpha-catenin family. In terms of assembly, interacts with ARHGEF1. Interacts with DTNA. The interaction is required for correct localization of both CTNL1 and DTNA. As to expression, widely expressed. Expressed at lower level in neural tissues and at the highest level in the adrenal gland.

It localises to the cytoplasm. The protein resides in the cytoskeleton. The protein localises to the cell membrane. In terms of biological role, may modulate the Rho pathway signaling by providing a scaffold for the Lbc Rho guanine nucleotide exchange factor (ARHGEF1). In Homo sapiens (Human), this protein is Alpha-catulin (CTNNAL1).